A 302-amino-acid polypeptide reads, in one-letter code: Sulfate adenylyltransferase subunit 2 (302 aa).

It belongs to the PAPS reductase family. CysD subfamily. In terms of assembly, heterodimer composed of CysD, the smaller subunit, and CysN.

The enzyme catalyses sulfate + ATP + H(+) = adenosine 5'-phosphosulfate + diphosphate. Its pathway is sulfur metabolism; hydrogen sulfide biosynthesis; sulfite from sulfate: step 1/3. Its function is as follows. With CysN forms the ATP sulfurylase (ATPS) that catalyzes the adenylation of sulfate producing adenosine 5'-phosphosulfate (APS) and diphosphate, the first enzymatic step in sulfur assimilation pathway. APS synthesis involves the formation of a high-energy phosphoric-sulfuric acid anhydride bond driven by GTP hydrolysis by CysN coupled to ATP hydrolysis by CysD. The protein is Sulfate adenylyltransferase subunit 2 of Escherichia coli O7:K1 (strain IAI39 / ExPEC).